The sequence spans 693 residues: DNA ligase (693 aa).

NAD(+) is bound by residues 45 to 49, 94 to 95, and glutamate 131; these read DSEYD and SI. Residue lysine 133 is the N6-AMP-lysine intermediate of the active site. The NAD(+) site is built by arginine 154, glutamate 190, lysine 307, and lysine 331. The Zn(2+) site is built by cysteine 429, cysteine 432, cysteine 447, and cysteine 453. Positions 615 to 693 constitute a BRCT domain; the sequence is ASSSKLEGKT…EEGLLSLLAE (79 aa).

The protein belongs to the NAD-dependent DNA ligase family. LigA subfamily. Mg(2+) is required as a cofactor. Requires Mn(2+) as cofactor.

It catalyses the reaction NAD(+) + (deoxyribonucleotide)n-3'-hydroxyl + 5'-phospho-(deoxyribonucleotide)m = (deoxyribonucleotide)n+m + AMP + beta-nicotinamide D-nucleotide.. DNA ligase that catalyzes the formation of phosphodiester linkages between 5'-phosphoryl and 3'-hydroxyl groups in double-stranded DNA using NAD as a coenzyme and as the energy source for the reaction. It is essential for DNA replication and repair of damaged DNA. This chain is DNA ligase, found in Methylobacillus flagellatus (strain ATCC 51484 / DSM 6875 / VKM B-1610 / KT).